We begin with the raw amino-acid sequence, 317 residues long: Porphobilinogen deaminase (317 aa).

Cysteine 245 carries the S-(dipyrrolylmethanemethyl)cysteine modification.

Belongs to the HMBS family. Monomer. Dipyrromethane is required as a cofactor.

The enzyme catalyses 4 porphobilinogen + H2O = hydroxymethylbilane + 4 NH4(+). The protein operates within porphyrin-containing compound metabolism; protoporphyrin-IX biosynthesis; coproporphyrinogen-III from 5-aminolevulinate: step 2/4. Its pathway is porphyrin-containing compound metabolism; chlorophyll biosynthesis. Functionally, tetrapolymerization of the monopyrrole PBG into the hydroxymethylbilane pre-uroporphyrinogen in several discrete steps. The chain is Porphobilinogen deaminase from Prochlorococcus marinus (strain MIT 9303).